A 95-amino-acid chain; its full sequence is UPF0473 protein GWCH70_2487 (95 aa).

It belongs to the UPF0473 family.

This is UPF0473 protein GWCH70_2487 from Geobacillus sp. (strain WCH70).